Consider the following 143-residue polypeptide: Periplasmic nitrate reductase, electron transfer subunit (143 aa).

A signal peptide spans 1–22 (MKKILTLAAIVLAIGGCSGQQA). Residues histidine 72, cysteine 85, cysteine 88, histidine 89, histidine 106, cysteine 121, cysteine 124, and histidine 125 each contribute to the heme c site.

The protein belongs to the NapB family. As to quaternary structure, component of the periplasmic nitrate reductase NapAB complex composed of NapA and NapB. Post-translationally, binds 2 heme C groups per subunit.

It localises to the periplasm. In terms of biological role, electron transfer subunit of the periplasmic nitrate reductase complex NapAB. Receives electrons from the membrane-anchored tetraheme c-type CymA protein and transfers these to NapA subunit, thus allowing electron flow between membrane and periplasm. Not essential for nitrate reduction but confers advantage to the organism when grown on nitrate and thereby a fitness gain in utilizing nitrate. The chain is Periplasmic nitrate reductase, electron transfer subunit from Shewanella oneidensis (strain ATCC 700550 / JCM 31522 / CIP 106686 / LMG 19005 / NCIMB 14063 / MR-1).